The primary structure comprises 332 residues: Glycerol-3-phosphate dehydrogenase [NAD(P)+] (332 aa).

Positions 11, 12, 32, and 106 each coordinate NADPH. Residues lysine 106, glycine 137, and serine 139 each contribute to the sn-glycerol 3-phosphate site. Position 141 (alanine 141) interacts with NADPH. Lysine 192, aspartate 245, serine 255, arginine 256, and asparagine 257 together coordinate sn-glycerol 3-phosphate. Lysine 192 (proton acceptor) is an active-site residue. Arginine 256 provides a ligand contact to NADPH. Valine 280 and glutamate 282 together coordinate NADPH.

The protein belongs to the NAD-dependent glycerol-3-phosphate dehydrogenase family.

It localises to the cytoplasm. The enzyme catalyses sn-glycerol 3-phosphate + NAD(+) = dihydroxyacetone phosphate + NADH + H(+). The catalysed reaction is sn-glycerol 3-phosphate + NADP(+) = dihydroxyacetone phosphate + NADPH + H(+). The protein operates within membrane lipid metabolism; glycerophospholipid metabolism. Functionally, catalyzes the reduction of the glycolytic intermediate dihydroxyacetone phosphate (DHAP) to sn-glycerol 3-phosphate (G3P), the key precursor for phospholipid synthesis. The polypeptide is Glycerol-3-phosphate dehydrogenase [NAD(P)+] (Macrococcus caseolyticus (strain JCSC5402) (Macrococcoides caseolyticum)).